The primary structure comprises 298 residues: Bifunctional methyltransferase/endonuclease (298 aa).

The interval M1–R79 is probable methylated-DNA--protein-cysteine methyltransferase. C56 is an active-site residue. The interval L80–I298 is endonuclease V. D137 and D197 together coordinate Mg(2+).

This sequence in the N-terminal section; belongs to the MGMT family. In the C-terminal section; belongs to the endonuclease V family. Requires Mg(2+) as cofactor.

It is found in the cytoplasm. The enzyme catalyses Endonucleolytic cleavage at apurinic or apyrimidinic sites to products with a 5'-phosphate.. Its function is as follows. DNA repair enzyme involved in the repair of deaminated bases. Selectively cleaves double-stranded DNA at the second phosphodiester bond 3' to a deoxyinosine leaving behind the intact lesion on the nicked DNA. The sequence is that of Bifunctional methyltransferase/endonuclease from Picrophilus torridus (strain ATCC 700027 / DSM 9790 / JCM 10055 / NBRC 100828 / KAW 2/3).